The primary structure comprises 357 residues: Red-sensitive opsin-1 (357 aa).

Over 1–49 (MAEHWGDAIYAARRKGDETTREAMFTYTNSNNTKDPFEGPNYHIAPRWV) the chain is Extracellular. Asn-31 carries an N-linked (GlcNAc...) asparagine glycan. A helical transmembrane segment spans residues 50–74 (YNVATVWMFFVVVASTFTNGLVLVA). The Cytoplasmic segment spans residues 75–86 (TAKFKKLRHPLN). The chain crosses the membrane as a helical span at residues 87 to 112 (WILVNLAIADLGETLFASTISVINQF). Residues 113–126 (FGYFILGHPMCIFE) lie on the Extracellular side of the membrane. Cys-123 and Cys-200 are disulfide-bonded. A helical transmembrane segment spans residues 127 to 146 (GYTVSVCGIAALWSLTVISW). The Cytoplasmic portion of the chain corresponds to 147–165 (ERWVVVCKPFGNVKFDAKW). A helical transmembrane segment spans residues 166 to 189 (ASAGIIFSWVWAAAWCAPPIFGWS). Over 190–215 (RYWPHGLKTSCGPDVFSGSEDPGVQS) the chain is Extracellular. A helical transmembrane segment spans residues 216–243 (YMVVLMITCCIIPLAIIILCYIAVYLAI). At 244 to 265 (HAVAQQQKDSESTQKAEKEVSR) the chain is on the cytoplasmic side. A helical membrane pass occupies residues 266 to 289 (MVVVMIFAYCFCWGPYTFFACFAA). Residues 290–297 (ANPGYAFH) lie on the Extracellular side of the membrane. A helical transmembrane segment spans residues 298 to 322 (PLAAAMPAYFAKSATIYNPVIYVFM). N6-(retinylidene)lysine is present on Lys-309. Topologically, residues 323 to 357 (NRQFRVCIMQLFGKKVDDGSEVSTSKTEVSSVAPA) are cytoplasmic.

It belongs to the G-protein coupled receptor 1 family. Opsin subfamily. Post-translationally, phosphorylated on some or all of the serine and threonine residues present in the C-terminal region. In terms of tissue distribution, retinal double cone principal photoreceptor cell outer segments.

It localises to the membrane. Visual pigments are the light-absorbing molecules that mediate vision. They consist of an apoprotein, opsin, covalently linked to cis-retinal. This is Red-sensitive opsin-1 (opn1lw1) from Danio rerio (Zebrafish).